The following is a 168-amino-acid chain: Photosystem I assembly protein Ycf3 (168 aa).

TPR repeat units lie at residues 35-68 (AFTY…EIDP), 72-105 (SYIL…NPFL), and 120-153 (GEQA…TPGN).

Belongs to the Ycf3 family.

It is found in the plastid. The protein localises to the chloroplast thylakoid membrane. Its function is as follows. Essential for the assembly of the photosystem I (PSI) complex. May act as a chaperone-like factor to guide the assembly of the PSI subunits. The protein is Photosystem I assembly protein Ycf3 of Helianthus annuus (Common sunflower).